Reading from the N-terminus, the 512-residue chain is Cobyric acid synthase (512 aa).

A GATase cobBQ-type domain is found at 262-442 (WLRVAAIRLP…WHGLLETDRF (181 aa)). C343 functions as the Nucleophile in the catalytic mechanism. The active site involves H434.

It belongs to the CobB/CobQ family. CobQ subfamily.

The protein operates within cofactor biosynthesis; adenosylcobalamin biosynthesis. In terms of biological role, catalyzes amidations at positions B, D, E, and G on adenosylcobyrinic A,C-diamide. NH(2) groups are provided by glutamine, and one molecule of ATP is hydrogenolyzed for each amidation. The sequence is that of Cobyric acid synthase from Rhodococcus jostii (strain RHA1).